We begin with the raw amino-acid sequence, 100 residues long: Putative membrane protein insertion efficiency factor (100 aa).

A disordered region spans residues 73–100 (DPVPDLPGSAPEENGRPSPDGQHSGSGG).

It belongs to the UPF0161 family.

The protein resides in the cell inner membrane. Could be involved in insertion of integral membrane proteins into the membrane. This Synechococcus sp. (strain JA-3-3Ab) (Cyanobacteria bacterium Yellowstone A-Prime) protein is Putative membrane protein insertion efficiency factor.